A 349-amino-acid chain; its full sequence is Gibberellin 3-beta-dioxygenase 3 (349 aa).

Positions 201-305 (SIQSFLQLNS…RVSAAYFAGP (105 aa)) constitute a Fe2OG dioxygenase domain. H226, D228, and H286 together coordinate Fe cation. R296 is a catalytic residue.

The protein belongs to the iron/ascorbate-dependent oxidoreductase family. GA3OX subfamily. L-ascorbate is required as a cofactor. It depends on Fe cation as a cofactor. In terms of tissue distribution, expressed in flower clusters and siliques.

It carries out the reaction gibberellin A20 + 2-oxoglutarate + O2 = gibberellin A1 + succinate + CO2. Its pathway is plant hormone biosynthesis; gibberellin biosynthesis. Functionally, converts the inactive gibberellin (GA) precursors GA9 and GA20 in the bioactives gibberellins GA4 and GA1. Involved in the production of bioactive GA for reproductive development. The polypeptide is Gibberellin 3-beta-dioxygenase 3 (GA3OX3) (Arabidopsis thaliana (Mouse-ear cress)).